The following is a 391-amino-acid chain: 4-hydroxy-3-methylbut-2-en-1-yl diphosphate synthase (flavodoxin) (391 aa).

4 residues coordinate [4Fe-4S] cluster: Cys281, Cys284, Cys316, and Glu323. The disordered stretch occupies residues 372–391 (EMGGEDGQGGIKGSPVVSVS).

The protein belongs to the IspG family. [4Fe-4S] cluster serves as cofactor.

It catalyses the reaction (2E)-4-hydroxy-3-methylbut-2-enyl diphosphate + oxidized [flavodoxin] + H2O + 2 H(+) = 2-C-methyl-D-erythritol 2,4-cyclic diphosphate + reduced [flavodoxin]. It participates in isoprenoid biosynthesis; isopentenyl diphosphate biosynthesis via DXP pathway; isopentenyl diphosphate from 1-deoxy-D-xylulose 5-phosphate: step 5/6. Functionally, converts 2C-methyl-D-erythritol 2,4-cyclodiphosphate (ME-2,4cPP) into 1-hydroxy-2-methyl-2-(E)-butenyl 4-diphosphate. The polypeptide is 4-hydroxy-3-methylbut-2-en-1-yl diphosphate synthase (flavodoxin) (Renibacterium salmoninarum (strain ATCC 33209 / DSM 20767 / JCM 11484 / NBRC 15589 / NCIMB 2235)).